The following is a 91-amino-acid chain: Large ribosomal subunit protein bL31 (91 aa).

Residues 62–91 form a disordered region; the sequence is RRKYSGTKPQQTAKGKKAAPKSTPKTNKKG.

Belongs to the bacterial ribosomal protein bL31 family. Type A subfamily. Part of the 50S ribosomal subunit.

Functionally, binds the 23S rRNA. The sequence is that of Large ribosomal subunit protein bL31 from Thermosynechococcus vestitus (strain NIES-2133 / IAM M-273 / BP-1).